Consider the following 176-residue polypeptide: Tubulin polymerization-promoting protein family member 3 (176 aa).

At A2 the chain carries N-acetylalanine. The segment at 132–152 is disordered; sequence TGSHKERFDESGKGKGIAGRQ. Residues 134–144 are compositionally biased toward basic and acidic residues; sequence SHKERFDESGK.

It belongs to the TPPP family. As to expression, expressed in endometrium during the mid-secretory phase (LH + 7) (at protein level).

It localises to the cytoplasm. The protein localises to the cytoskeleton. Regulator of microtubule dynamic that has microtubule bundling activity. Required for embryo implantation; possibly by regulating beta-catenin. Also required for decidualization via regulation of beta-catenin. This Homo sapiens (Human) protein is Tubulin polymerization-promoting protein family member 3.